The sequence spans 438 residues: Methylenetetrahydrofolate--tRNA-(uracil-5-)-methyltransferase TrmFO (438 aa).

An FAD-binding site is contributed by 9-14 (GAGLAG).

It belongs to the MnmG family. TrmFO subfamily. It depends on FAD as a cofactor.

The protein localises to the cytoplasm. It catalyses the reaction uridine(54) in tRNA + (6R)-5,10-methylene-5,6,7,8-tetrahydrofolate + NADH + H(+) = 5-methyluridine(54) in tRNA + (6S)-5,6,7,8-tetrahydrofolate + NAD(+). The enzyme catalyses uridine(54) in tRNA + (6R)-5,10-methylene-5,6,7,8-tetrahydrofolate + NADPH + H(+) = 5-methyluridine(54) in tRNA + (6S)-5,6,7,8-tetrahydrofolate + NADP(+). Functionally, catalyzes the folate-dependent formation of 5-methyl-uridine at position 54 (M-5-U54) in all tRNAs. The polypeptide is Methylenetetrahydrofolate--tRNA-(uracil-5-)-methyltransferase TrmFO (Lactobacillus acidophilus (strain ATCC 700396 / NCK56 / N2 / NCFM)).